A 449-amino-acid polypeptide reads, in one-letter code: Tubulin alpha-8 chain (449 aa).

Residues 1-4 (MREC) carry the MREC motif motif. Positions 11, 71, 140, 144, 145, 179, 206, and 228 each coordinate GTP. Glutamate 71 serves as a coordination point for Mg(2+). The active site involves glutamate 254.

Belongs to the tubulin family. Dimer of alpha and beta chains. A typical microtubule is a hollow water-filled tube with an outer diameter of 25 nm and an inner diameter of 15 nM. Alpha-beta heterodimers associate head-to-tail to form protofilaments running lengthwise along the microtubule wall with the beta-tubulin subunit facing the microtubule plus end conferring a structural polarity. Microtubules usually have 13 protofilaments but different protofilament numbers can be found in some organisms and specialized cells. Mg(2+) is required as a cofactor. In terms of processing, some glutamate residues at the C-terminus are polyglycylated, resulting in polyglycine chains on the gamma-carboxyl group. Glycylation is mainly limited to tubulin incorporated into axonemes (cilia and flagella) whereas glutamylation is prevalent in neuronal cells, centrioles, axonemes, and the mitotic spindle. Both modifications can coexist on the same protein on adjacent residues, and lowering polyglycylation levels increases polyglutamylation, and reciprocally. Cilia and flagella glycylation is required for their stability and maintenance. Flagella glycylation controls sperm motility. Post-translationally, some glutamate residues at the C-terminus are polyglutamylated, resulting in polyglutamate chains on the gamma-carboxyl group. Polyglutamylation plays a key role in microtubule severing by spastin (SPAST). SPAST preferentially recognizes and acts on microtubules decorated with short polyglutamate tails: severing activity by SPAST increases as the number of glutamates per tubulin rises from one to eight, but decreases beyond this glutamylation threshold. Glutamylation is also involved in cilia motility. The C-terminal phenylalanine residue is cleaved by MATCAP1/KIAA0895L.

The protein localises to the cytoplasm. Its subcellular location is the cytoskeleton. The enzyme catalyses GTP + H2O = GDP + phosphate + H(+). Functionally, tubulin is the major constituent of microtubules, a cylinder consisting of laterally associated linear protofilaments composed of alpha- and beta-tubulin heterodimers. Microtubules grow by the addition of GTP-tubulin dimers to the microtubule end, where a stabilizing cap forms. Below the cap, tubulin dimers are in GDP-bound state, owing to GTPase activity of alpha-tubulin. The polypeptide is Tubulin alpha-8 chain (TUBA8) (Bos taurus (Bovine)).